The chain runs to 189 residues: RNA-binding protein (189 aa).

The C4-type zinc-finger motif lies at 55–69; it reads CICPSSNHLVDDCVC. The tract at residues 114–189 is disordered; the sequence is FLTSVNPGES…DANTRKSKRK (76 aa). Residues 158–167 are compositionally biased toward basic and acidic residues; it reads SSSERKRKEY. The segment covering 168–180 has biased composition (low complexity); the sequence is SSNSETDLSSDSD.

This sequence belongs to the phytoreovirus RNA-binding protein family.

Its subcellular location is the host cytoplasm. Its function is as follows. Constituent of viral factories. Binds to ssRNA and dsRNA. The protein is RNA-binding protein of Alopecurus aequalis (Barnyard grass).